Here is a 219-residue protein sequence, read N- to C-terminus: Phosphatidylserine decarboxylase proenzyme (219 aa).

Catalysis depends on serine 188, which acts as the Schiff-base intermediate with substrate; via pyruvic acid. Residue serine 188 is modified to Pyruvic acid (Ser); by autocatalysis.

Belongs to the phosphatidylserine decarboxylase family. PSD-A subfamily. Heterodimer of a large membrane-associated beta subunit and a small pyruvoyl-containing alpha subunit. The cofactor is pyruvate. Is synthesized initially as an inactive proenzyme. Formation of the active enzyme involves a self-maturation process in which the active site pyruvoyl group is generated from an internal serine residue via an autocatalytic post-translational modification. Two non-identical subunits are generated from the proenzyme in this reaction, and the pyruvate is formed at the N-terminus of the alpha chain, which is derived from the carboxyl end of the proenzyme. The post-translation cleavage follows an unusual pathway, termed non-hydrolytic serinolysis, in which the side chain hydroxyl group of the serine supplies its oxygen atom to form the C-terminus of the beta chain, while the remainder of the serine residue undergoes an oxidative deamination to produce ammonia and the pyruvoyl prosthetic group on the alpha chain.

It is found in the cell membrane. The enzyme catalyses a 1,2-diacyl-sn-glycero-3-phospho-L-serine + H(+) = a 1,2-diacyl-sn-glycero-3-phosphoethanolamine + CO2. Its pathway is phospholipid metabolism; phosphatidylethanolamine biosynthesis; phosphatidylethanolamine from CDP-diacylglycerol: step 2/2. In terms of biological role, catalyzes the formation of phosphatidylethanolamine (PtdEtn) from phosphatidylserine (PtdSer). The protein is Phosphatidylserine decarboxylase proenzyme of Citrifermentans bemidjiense (strain ATCC BAA-1014 / DSM 16622 / JCM 12645 / Bem) (Geobacter bemidjiensis).